A 207-amino-acid chain; its full sequence is Peptidyl-prolyl cis-trans isomerase FKBP16-1, chloroplastic (207 aa).

The PPIase FKBP-type domain maps to 104–207 (GDLVELNYVC…VFEIQLLKVL (104 aa)).

It belongs to the FKBP-type PPIase family.

It localises to the plastid. Its subcellular location is the chloroplast thylakoid lumen. The enzyme catalyses [protein]-peptidylproline (omega=180) = [protein]-peptidylproline (omega=0). PPIases accelerate the folding of proteins. It catalyzes the cis-trans isomerization of proline imidic peptide bonds in oligopeptides. In Arabidopsis thaliana (Mouse-ear cress), this protein is Peptidyl-prolyl cis-trans isomerase FKBP16-1, chloroplastic (FKBP16-1).